The following is a 379-amino-acid chain: tRNA (guanine(26)-N(2))-dimethyltransferase (379 aa).

One can recognise a Trm1 methyltransferase domain in the interval 4-375 (VEVLEGKAKI…APYEVFVNVL (372 aa)). Residues arginine 36, arginine 61, aspartate 78, aspartate 120, and alanine 121 each coordinate S-adenosyl-L-methionine.

Belongs to the class I-like SAM-binding methyltransferase superfamily. Trm1 family.

It carries out the reaction guanosine(26) in tRNA + 2 S-adenosyl-L-methionine = N(2)-dimethylguanosine(26) in tRNA + 2 S-adenosyl-L-homocysteine + 2 H(+). Dimethylates a single guanine residue at position 26 of a number of tRNAs using S-adenosyl-L-methionine as donor of the methyl groups. This Pyrococcus abyssi (strain GE5 / Orsay) protein is tRNA (guanine(26)-N(2))-dimethyltransferase.